Consider the following 362-residue polypeptide: Microfibril-associated glycoprotein 3 (362 aa).

The signal sequence occupies residues 1 to 18; the sequence is MKLHCCLFTLVASIIVPA. At 19 to 147 the chain is on the extracellular side; sequence AFVLEDVDFD…LRVIFTSGDM (129 aa). Residues Asn-36, Asn-41, and Asn-110 are each glycosylated (N-linked (GlcNAc...) asparagine). One can recognise an Ig-like C2-type domain in the interval 45–137; the sequence is PSSFELSASS…SPIRASYSVT (93 aa). A disulfide bridge connects residues Cys-73 and Cys-124. A helical membrane pass occupies residues 148-170; that stretch reads SVYYMIVCLIAFTITLILNVTRL. Topologically, residues 171 to 362 are cytoplasmic; it reads CMMSSHLRKT…KDGAYENCQL (192 aa). Disordered stretches follow at residues 285 to 306 and 323 to 350; these read VINP…GSLN and ETKS…ESNC. The span at 323–337 shows a compositional bias: polar residues; sequence ETKSIDTESQGSSHF.

In terms of processing, glycosylated.

It localises to the cell membrane. In terms of biological role, component of the elastin-associated microfibrils. This Homo sapiens (Human) protein is Microfibril-associated glycoprotein 3 (MFAP3).